A 347-amino-acid chain; its full sequence is Protein pelota homolog (347 aa).

The protein belongs to the eukaryotic release factor 1 family. Pelota subfamily. In terms of assembly, monomer. Requires a divalent metal cation as cofactor.

Its subcellular location is the cytoplasm. Its function is as follows. May function in recognizing stalled ribosomes, interact with stem-loop structures in stalled mRNA molecules, and effect endonucleolytic cleavage of the mRNA. May play a role in the release non-functional ribosomes and degradation of damaged mRNAs. Has endoribonuclease activity. In Methanococcoides burtonii (strain DSM 6242 / NBRC 107633 / OCM 468 / ACE-M), this protein is Protein pelota homolog.